A 358-amino-acid polypeptide reads, in one-letter code: Magnesium-protoporphyrin IX monomethyl ester [oxidative] cyclase 2 (358 aa).

This sequence belongs to the AcsF family. Requires Fe cation as cofactor.

The catalysed reaction is Mg-protoporphyrin IX 13-monomethyl ester + 3 NADPH + 3 O2 + 2 H(+) = 3,8-divinyl protochlorophyllide a + 3 NADP(+) + 5 H2O. It participates in porphyrin-containing compound metabolism; chlorophyll biosynthesis (light-independent). In terms of biological role, catalyzes the formation of the isocyclic ring in chlorophyll biosynthesis. Mediates the cyclase reaction, which results in the formation of divinylprotochlorophyllide (Pchlide) characteristic of all chlorophylls from magnesium-protoporphyrin IX 13-monomethyl ester (MgPMME). The sequence is that of Magnesium-protoporphyrin IX monomethyl ester [oxidative] cyclase 2 from Nostoc sp. (strain PCC 7120 / SAG 25.82 / UTEX 2576).